The primary structure comprises 735 residues: Ion-translocating oxidoreductase complex subunit C (735 aa).

4Fe-4S ferredoxin-type domains lie at 368-397 (MGAP…QQLY) and 407-436 (KATA…VQYF). [4Fe-4S] cluster is bound by residues cysteine 377, cysteine 380, cysteine 383, cysteine 387, cysteine 416, cysteine 419, cysteine 422, and cysteine 426. The tract at residues 534-715 (QARAKQAAHP…AVDPRKAAVA (182 aa)) is disordered. A compositionally biased stretch (low complexity) spans 666–689 (QQAGSEPAEPAAPRKAAVEAAIAR).

This sequence belongs to the 4Fe4S bacterial-type ferredoxin family. RnfC subfamily. As to quaternary structure, the complex is composed of six subunits: RsxA, RsxB, RsxC, RsxD, RsxE and RsxG. [4Fe-4S] cluster is required as a cofactor.

The protein localises to the cell inner membrane. Functionally, part of a membrane-bound complex that couples electron transfer with translocation of ions across the membrane. Required to maintain the reduced state of SoxR. The chain is Ion-translocating oxidoreductase complex subunit C from Salmonella paratyphi B (strain ATCC BAA-1250 / SPB7).